The primary structure comprises 397 residues: Phosphonopyruvate decarboxylase (397 aa).

Belongs to the TPP enzyme family. It depends on thiamine diphosphate as a cofactor. Requires Mg(2+) as cofactor.

It catalyses the reaction 3-phosphonopyruvate + H(+) = phosphonoacetaldehyde + CO2. The protein operates within secondary metabolite biosynthesis; bialaphos biosynthesis. Its function is as follows. Involved in the biosynthesis of phosphinothricin tripeptide (PTT), also known as bialaphos (BA), a natural-product antibiotic and potent herbicide. Catalyzes the decarboxylation of phosphonopyruvate (PnPy) to generate phosphonoacetaldehyde (PnAA). The polypeptide is Phosphonopyruvate decarboxylase (Streptomyces viridochromogenes (strain DSM 40736 / JCM 4977 / BCRC 1201 / Tue 494)).